The sequence spans 276 residues: GPN-loop GTPase 3 (276 aa).

Residue 13–18 (SSGKST) participates in GTP binding. The Gly-Pro-Asn (GPN)-loop; involved in dimer interface signature appears at 70–72 (GPN). GTP is bound at residue 173-176 (SKMD). Positions 257–276 (EDQEPKDPDRFEADDLEDDE) are disordered. Over residues 259–269 (QEPKDPDRFEA) the composition is skewed to basic and acidic residues.

The protein belongs to the GPN-loop GTPase family. In terms of assembly, heterodimers with gpn1 or gpn2. Binds to RNA polymerase II (RNAPII).

The protein resides in the cytoplasm. It localises to the nucleus. In terms of biological role, small GTPase required for proper nuclear import of RNA polymerase II and III (RNAPII and RNAPIII). May act at an RNAP assembly step prior to nuclear import. This Schizosaccharomyces pombe (strain 972 / ATCC 24843) (Fission yeast) protein is GPN-loop GTPase 3.